Here is a 102-residue protein sequence, read N- to C-terminus: Monothiol glutaredoxin-S10 (102 aa).

In terms of domain architecture, Glutaredoxin spans M1–W101. C21 is a binding site for [2Fe-2S] cluster. Residues A99–L102 carry the Responsive for interaction with TGA factors motif.

Belongs to the glutaredoxin family. CC-type subfamily.

The protein localises to the cytoplasm. Its subcellular location is the nucleus. Functionally, may only reduce GSH-thiol disulfides, but not protein disulfides. This chain is Monothiol glutaredoxin-S10 (GRXS10), found in Arabidopsis thaliana (Mouse-ear cress).